The sequence spans 549 residues: Chaperonin GroEL (549 aa).

ATP contacts are provided by residues 29–32 (TLGP), lysine 50, 86–90 (DGTTT), glycine 414, 477–479 (NAA), and aspartate 493.

The protein belongs to the chaperonin (HSP60) family. As to quaternary structure, forms a cylinder of 14 subunits composed of two heptameric rings stacked back-to-back. Interacts with the co-chaperonin GroES.

The protein resides in the cytoplasm. It catalyses the reaction ATP + H2O + a folded polypeptide = ADP + phosphate + an unfolded polypeptide.. Its function is as follows. Together with its co-chaperonin GroES, plays an essential role in assisting protein folding. The GroEL-GroES system forms a nano-cage that allows encapsulation of the non-native substrate proteins and provides a physical environment optimized to promote and accelerate protein folding. The chain is Chaperonin GroEL from Geotalea uraniireducens (strain Rf4) (Geobacter uraniireducens).